The primary structure comprises 509 residues: Histidine ammonia-lyase (509 aa).

Residues A142–G144 constitute a cross-link (5-imidazolinone (Ala-Gly)). S143 bears the 2,3-didehydroalanine (Ser) mark.

It belongs to the PAL/histidase family. Contains an active site 4-methylidene-imidazol-5-one (MIO), which is formed autocatalytically by cyclization and dehydration of residues Ala-Ser-Gly.

Its subcellular location is the cytoplasm. The catalysed reaction is L-histidine = trans-urocanate + NH4(+). Its pathway is amino-acid degradation; L-histidine degradation into L-glutamate; N-formimidoyl-L-glutamate from L-histidine: step 1/3. This chain is Histidine ammonia-lyase, found in Sphingopyxis alaskensis (strain DSM 13593 / LMG 18877 / RB2256) (Sphingomonas alaskensis).